Consider the following 181-residue polypeptide: tRNA-splicing endonuclease (181 aa).

Active-site residues include Tyr-118, His-126, and Lys-157.

It belongs to the tRNA-intron endonuclease family. Archaeal short subfamily. Homotetramer; although the tetramer contains four active sites, only two participate in the cleavage. Therefore, it should be considered as a dimer of dimers.

It carries out the reaction pretRNA = a 3'-half-tRNA molecule with a 5'-OH end + a 5'-half-tRNA molecule with a 2',3'-cyclic phosphate end + an intron with a 2',3'-cyclic phosphate and a 5'-hydroxyl terminus.. In terms of biological role, endonuclease that removes tRNA introns. Cleaves pre-tRNA at the 5'- and 3'-splice sites to release the intron. The products are an intron and two tRNA half-molecules bearing 2',3' cyclic phosphate and 5'-OH termini. Recognizes a pseudosymmetric substrate in which 2 bulged loops of 3 bases are separated by a stem of 4 bp. In Hyperthermus butylicus (strain DSM 5456 / JCM 9403 / PLM1-5), this protein is tRNA-splicing endonuclease.